The primary structure comprises 498 residues: Lysine--tRNA ligase (498 aa).

Residues glutamate 407 and glutamate 414 each coordinate Mg(2+).

This sequence belongs to the class-II aminoacyl-tRNA synthetase family. Homodimer. Mg(2+) serves as cofactor.

It localises to the cytoplasm. The enzyme catalyses tRNA(Lys) + L-lysine + ATP = L-lysyl-tRNA(Lys) + AMP + diphosphate. This is Lysine--tRNA ligase from Rhizobium etli (strain CIAT 652).